The following is a 212-amino-acid chain: Adenylate kinase (212 aa).

Residue 10–15 (GAGKGT) coordinates ATP. The NMP stretch occupies residues 30 to 59 (STGDMFRAAMANQTEMGRLAKSYIDKGELV). AMP is bound by residues threonine 31, arginine 36, 57–59 (ELV), 86–89 (GYPR), and glutamine 93. The segment at 127–159 (GRIINRKTGETFHKVFNPPVDYKEEDYYQREDD) is LID. Residues arginine 128 and 137–138 (TF) contribute to the ATP site. AMP is bound by residues arginine 156 and arginine 167. Position 195 (glutamine 195) interacts with ATP.

It belongs to the adenylate kinase family. In terms of assembly, monomer.

The protein resides in the cytoplasm. The enzyme catalyses AMP + ATP = 2 ADP. The protein operates within purine metabolism; AMP biosynthesis via salvage pathway; AMP from ADP: step 1/1. Its function is as follows. Catalyzes the reversible transfer of the terminal phosphate group between ATP and AMP. Plays an important role in cellular energy homeostasis and in adenine nucleotide metabolism. This is Adenylate kinase from Streptococcus pyogenes serotype M5 (strain Manfredo).